The chain runs to 586 residues: Phosphatase and actin regulator 1 (586 aa).

The Nuclear localization signal motif lies at R62–K83. The stretch at A92–Y117 is one RPEL 1 repeat. The tract at residues E373 to S414 is disordered. Positions D397–S413 are enriched in acidic residues. RPEL repeat units lie at residues D428 to T453, T466 to N491, and R504 to S529.

It belongs to the phosphatase and actin regulator family. As to quaternary structure, interacts (via RPEL repeats) with ACTA1.

Its subcellular location is the cytoplasm. The protein resides in the synapse. The protein localises to the nucleus. In terms of biological role, binds actin monomers (G actin) and plays a role in the reorganization of the actin cytoskeleton and in formation of actin stress fibers. This is Phosphatase and actin regulator 1 (phactr1) from Xenopus laevis (African clawed frog).